Consider the following 284-residue polypeptide: 2-dehydro-3-deoxyphosphooctonate aldolase (284 aa).

The protein belongs to the KdsA family.

The protein resides in the cytoplasm. It catalyses the reaction D-arabinose 5-phosphate + phosphoenolpyruvate + H2O = 3-deoxy-alpha-D-manno-2-octulosonate-8-phosphate + phosphate. It functions in the pathway carbohydrate biosynthesis; 3-deoxy-D-manno-octulosonate biosynthesis; 3-deoxy-D-manno-octulosonate from D-ribulose 5-phosphate: step 2/3. Its pathway is bacterial outer membrane biogenesis; lipopolysaccharide biosynthesis. This chain is 2-dehydro-3-deoxyphosphooctonate aldolase, found in Pseudoalteromonas translucida (strain TAC 125).